The sequence spans 170 residues: uncharacterized protein (170 aa).

Residues 96 to 116 form a helical membrane-spanning segment; the sequence is FSAISIGSFPIVLFLSLFFFD.

The protein resides in the membrane. This is an uncharacterized protein from Borreliella burgdorferi (strain ATCC 35210 / DSM 4680 / CIP 102532 / B31) (Borrelia burgdorferi).